Reading from the N-terminus, the 189-residue chain is Chitin synthase 1 (189 aa).

Belongs to the chitin synthase family. Class I subfamily.

It is found in the cell membrane. It carries out the reaction [(1-&gt;4)-N-acetyl-beta-D-glucosaminyl](n) + UDP-N-acetyl-alpha-D-glucosamine = [(1-&gt;4)-N-acetyl-beta-D-glucosaminyl](n+1) + UDP + H(+). Its function is as follows. Polymerizes chitin, a structural polymer of the cell wall and septum, by transferring the sugar moiety of UDP-GlcNAc to the non-reducing end of the growing chitin polymer. In Exophiala jeanselmei (Dematiaceous fungus), this protein is Chitin synthase 1 (CHS1).